The chain runs to 121 residues: Small ribosomal subunit protein uS13 (121 aa).

The disordered stretch occupies residues 91-121 (HRRGLPVRGQNTKNNARTRKGKKASMAGKKK). The segment covering 106–121 (ARTRKGKKASMAGKKK) has biased composition (basic residues).

The protein belongs to the universal ribosomal protein uS13 family. In terms of assembly, part of the 30S ribosomal subunit. Forms a loose heterodimer with protein S19. Forms two bridges to the 50S subunit in the 70S ribosome.

Its function is as follows. Located at the top of the head of the 30S subunit, it contacts several helices of the 16S rRNA. In the 70S ribosome it contacts the 23S rRNA (bridge B1a) and protein L5 of the 50S subunit (bridge B1b), connecting the 2 subunits; these bridges are implicated in subunit movement. Contacts the tRNAs in the A and P-sites. This chain is Small ribosomal subunit protein uS13, found in Lacticaseibacillus paracasei (strain ATCC 334 / BCRC 17002 / CCUG 31169 / CIP 107868 / KCTC 3260 / NRRL B-441) (Lactobacillus paracasei).